The following is a 1108-amino-acid chain: Unconventional myosin-Ie (1108 aa).

The Myosin motor domain maps to 19–692 (SGVDDMVLLS…SLFLLEEMRE (674 aa)). Position 112–119 (112–119 (GESGAGKT)) interacts with ATP. The actin-binding stretch occupies residues 581-591 (PHYIRCIKPNE). The region spanning 695–724 (YDGYARVIQKSWRKFVARKKYVQMREEASD) is the IQ domain. A TH1 domain is found at 730–922 (KERRRNSINR…NKVLQVSIGP (193 aa)). A disordered region spans residues 919 to 966 (SIGPGLPKNSRPTRRNTTQNTGYSSGTQNANYPVRAAPPPPGYHQNGV). Over residues 933–949 (RNTTQNTGYSSGTQNAN) the composition is skewed to polar residues. 2 positions are modified to phosphoserine: Ser-980 and Ser-1002. The interval 993-1053 (ARPPLPRQQS…KPQPKPKPQV (61 aa)) is disordered. Polar residues predominate over residues 999 to 1013 (RQQSTSSDRVSQTPE). Residues 1035-1052 (RPPPAGGRPKPQPKPKPQ) are compositionally biased toward pro residues. Residues 1051–1108 (PQVPQCKALYAYDAQDTDELSFNANDIIDIIKEDPSGWWTGRLRGKQGLFPNNYVTKI) form the SH3 domain.

This sequence belongs to the TRAFAC class myosin-kinesin ATPase superfamily. Myosin family. In terms of assembly, interacts with CALM and F-actin. Interacts (via SH3 domain) with SYNJ1, DNM1 and DNM2. Interacts with ARL14EP. Interacts with CARMIL1. Expressed in the immune system. In the kidney, predominantly expressed in the glomerulus, including podocytes.

It localises to the cytoplasm. Its subcellular location is the cytoskeleton. The protein resides in the cytoplasmic vesicle. It is found in the clathrin-coated vesicle. The protein localises to the cell junction. In terms of biological role, actin-based motor molecule with ATPase activity. Unconventional myosins serve in intracellular movements. Their highly divergent tails bind to membranous compartments, which are then moved relative to actin filaments. Binds to membranes containing anionic phospholipids via its tail domain. Involved in clathrin-mediated endocytosis and intracellular movement of clathrin-coated vesicles. Required for normal morphology of the glomerular basement membrane, normal development of foot processes by kidney podocytes and normal kidney function. In dendritic cells, may control the movement of class II-containing cytoplasmic vesicles along the actin cytoskeleton by connecting them with the actin network via ARL14EP and ARL14. The polypeptide is Unconventional myosin-Ie (MYO1E) (Homo sapiens (Human)).